Here is a 914-residue protein sequence, read N- to C-terminus: MATTPDAAFEALMNGVTSWNLPKEPTPSELLLTGEAAFPVMVNDKDQVLIAASFYGHGRLVVLSHESYLLHAGLAPFLLNAVSWLCPSPEAPIAVHSSLASLVKILGDSGVNAVVQPEPREALGVYCIDAYSETLTETLIRFMKNGGGLLIGGQALTWAVHHGHEKVLSSFPGNQVTSVAGVYFTDISGNRDWFKVSKEIPNLTLYVQCEDELKYDQQQLLKGMSEMDIETGPVPSQLLVHGQRAFPLGVDNSFNCFLAAARFGRGRVVLAGHESLILNQTMLPFVLNALRWLMGNQTGRIGLASEMKALKSVLPNSSFEWSETELLTNDLSVFCSCSLGKTDPKKVEEFVAEGGGLLIGAEAWMWGRRNPDSNCMTQYPNNIILKRFGVGIISQVVQRGRFPVPNPEVINYHIRRALSQYESVIHSQGSSLQEGWLNKLSQDCFYMFQMTHQRISIYDSVKEHALKMIQSQGFPSVTEQHPITKGSSQAFLLSLAYELFKSGVDRSQLLPPPTLLSPTESPMTIKISTGNDNSWVSTGLYLPEGQVAQVTLPTEATHAKLKVLIGCHIDNISQAKTYIRPPVMTYVYHLTSSQTSISWLYGGLLYIMVPDKYNQDNVSVTISGAVSAPYFRLGKTTQEEWKNLIEHSKAPWGELATDNIILTIPTVNLKVLQDPYPLLQLWDKIVKAVAKLAARPFPFQRPERIVLDKQISFGFLHSGYPIMGLIIIVEGIINEFKIRSHGVWGVTHELGHNHQKPGWTFRPHTTEALCNLWSIYVHETVLNIPRDQAHPSLNPELRKQRIKDHLNKGAPLSNWIVWTALETYLQLQEGFGWEPFIQLFANYQTLTGLPQNNEDKMNLWVKKFSEVVQKNLAPFFKAWGWPVQHAVAKSLASLPEWQENPMKMYTAESTEHTE.

One can recognise a Peptidase M60 domain in the interval 533–832 (NSWVSTGLYL…TYLQLQEGFG (300 aa)).

The protein belongs to the TCAF family.

Functionally, may play a role in the regulation of the cation channel TRPM8 activity. In Rattus norvegicus (Rat), this protein is TRPM8 channel-associated factor 3.